A 295-amino-acid polypeptide reads, in one-letter code: UDP-N-acetylenolpyruvoylglucosamine reductase (295 aa).

The region spanning 23 to 188 (KVGGPADFLA…ISAKFALKPG (166 aa)) is the FAD-binding PCMH-type domain. Arg167 is an active-site residue. Ser217 functions as the Proton donor in the catalytic mechanism. The active site involves Glu287.

Belongs to the MurB family. The cofactor is FAD.

The protein resides in the cytoplasm. The catalysed reaction is UDP-N-acetyl-alpha-D-muramate + NADP(+) = UDP-N-acetyl-3-O-(1-carboxyvinyl)-alpha-D-glucosamine + NADPH + H(+). Its pathway is cell wall biogenesis; peptidoglycan biosynthesis. Its function is as follows. Cell wall formation. The polypeptide is UDP-N-acetylenolpyruvoylglucosamine reductase (Streptococcus pyogenes serotype M18 (strain MGAS8232)).